The primary structure comprises 205 residues: Non-specific lipid transfer protein GPI-anchored 21 (205 aa).

Residues 1–27 (MNSNSFLISAALIFSLLSSNSPTSILA) form the signal peptide. 4 cysteine pairs are disulfide-bonded: Cys-33/Cys-75, Cys-44/Cys-59, Cys-60/Cys-100, and Cys-73/Cys-109. N-linked (GlcNAc...) asparagine glycosylation occurs at Asn-89. Residues 116 to 182 (LPTPGPASFG…FAPPPPSSSP (67 aa)) are disordered. Residues 126–156 (PTTSPTDSQTSDPEGSASFRPPTSPTTSQTP) are compositionally biased toward low complexity. Residue Ser-179 is the site of GPI-anchor amidated serine attachment. A propeptide spans 180 to 205 (SSPSSSHSLKLSYLLFAFAFTIIKFI) (removed in mature form).

Belongs to the plant LTP family.

It localises to the cell membrane. Functionally, probable lipid transfer protein. In Arabidopsis thaliana (Mouse-ear cress), this protein is Non-specific lipid transfer protein GPI-anchored 21.